Consider the following 441-residue polypeptide: Coiled-coil domain-containing protein 91 (441 aa).

The GGA1-binding motif stretch occupies residues 1-16; sequence MDDDDFGGFEAAETFD. A disordered region spans residues 1-26; the sequence is MDDDDFGGFEAAETFDGGSGETQTTS. Serine 43 and serine 46 each carry phosphoserine. Coiled coils occupy residues 130–209 and 249–407; these read SNIQ…GHEA and ELLN…KRLD. The interval 210–413 is homodimerization; that stretch reads LSIIVDEYKA…KRLDQVIRQR (204 aa).

Homodimer. Interacts with GGA1, GGA2 and AP1G1. As to expression, widely expressed.

The protein localises to the membrane. Its subcellular location is the golgi apparatus. It localises to the trans-Golgi network membrane. The protein resides in the trans-Golgi network. In terms of biological role, involved in the regulation of membrane traffic through the trans-Golgi network (TGN). Functions in close cooperation with the GGAs in the sorting of hydrolases to lysosomes. This Homo sapiens (Human) protein is Coiled-coil domain-containing protein 91 (CCDC91).